The sequence spans 599 residues: Elongation factor 4 (599 aa).

A tr-type G domain is found at 2 to 184; the sequence is KNIRNFSIIA…RLVRDIPPPE (183 aa). Residues 14 to 19 and 131 to 134 contribute to the GTP site; these read DHGKST and NKID.

Belongs to the TRAFAC class translation factor GTPase superfamily. Classic translation factor GTPase family. LepA subfamily.

The protein resides in the cell inner membrane. It carries out the reaction GTP + H2O = GDP + phosphate + H(+). Functionally, required for accurate and efficient protein synthesis under certain stress conditions. May act as a fidelity factor of the translation reaction, by catalyzing a one-codon backward translocation of tRNAs on improperly translocated ribosomes. Back-translocation proceeds from a post-translocation (POST) complex to a pre-translocation (PRE) complex, thus giving elongation factor G a second chance to translocate the tRNAs correctly. Binds to ribosomes in a GTP-dependent manner. The chain is Elongation factor 4 from Citrobacter koseri (strain ATCC BAA-895 / CDC 4225-83 / SGSC4696).